Here is a 956-residue protein sequence, read N- to C-terminus: Pyruvate, phosphate dikinase, chloroplastic (956 aa).

The transit peptide at 1 to 79 directs the protein to the chloroplast; the sequence is MMSSLFVEGM…AVLNPVSPPV (79 aa). Residue Thr536 is modified to Phosphothreonine; by PDRP1. His538 serves as the catalytic Tele-phosphohistidine intermediate. Substrate contacts are provided by Arg644, Arg701, Glu830, Gly851, Thr852, Asn853, and Asp854. Glu830 provides a ligand contact to Mg(2+). Position 854 (Asp854) interacts with Mg(2+). Residue Cys916 is the Proton donor of the active site.

This sequence belongs to the PEP-utilizing enzyme family. Homotetramer. Mg(2+) is required as a cofactor. In terms of processing, phosphorylation of Thr-536 in the dark inactivates the enzyme. Dephosphorylation upon light stimulation reactivates the enzyme.

Its subcellular location is the plastid. It localises to the chloroplast. The catalysed reaction is pyruvate + phosphate + ATP = phosphoenolpyruvate + AMP + diphosphate + H(+). Activated by light-induced dephosphorylation. Inhibited by dark-induced phosphorylation. Both reactions are catalyzed by PDRP1. Its function is as follows. Formation of phosphoenolpyruvate. In Flaveria pringlei, this protein is Pyruvate, phosphate dikinase, chloroplastic (PPDK).